The sequence spans 61 residues: Small ribosomal subunit protein uS14 (61 aa).

Positions 24, 27, 40, and 43 each coordinate Zn(2+).

The protein belongs to the universal ribosomal protein uS14 family. Zinc-binding uS14 subfamily. In terms of assembly, part of the 30S ribosomal subunit. Contacts proteins S3 and S10. The cofactor is Zn(2+).

Binds 16S rRNA, required for the assembly of 30S particles and may also be responsible for determining the conformation of the 16S rRNA at the A site. The sequence is that of Small ribosomal subunit protein uS14 from Syntrophus aciditrophicus (strain SB).